A 213-amino-acid chain; its full sequence is Kynurenine formamidase (213 aa).

Substrate is bound at residue Trp18. Zn(2+) contacts are provided by His48, His52, and Asp54. Residue His58 is the Proton donor/acceptor of the active site. Residues His160 and Glu172 each contribute to the Zn(2+) site.

Belongs to the Cyclase 1 superfamily. KynB family. In terms of assembly, homodimer. Requires Zn(2+) as cofactor.

The enzyme catalyses N-formyl-L-kynurenine + H2O = L-kynurenine + formate + H(+). It participates in amino-acid degradation; L-tryptophan degradation via kynurenine pathway; L-kynurenine from L-tryptophan: step 2/2. Its function is as follows. Catalyzes the hydrolysis of N-formyl-L-kynurenine to L-kynurenine, the second step in the kynurenine pathway of tryptophan degradation. This chain is Kynurenine formamidase, found in Burkholderia orbicola (strain MC0-3).